The chain runs to 654 residues: MNIINLGILAHIDAGKTSVTENLLFASGATEKCGRVDNGDTITDSMDIEKRRGITVRASTTSIIWNGVKCNIIDTPGHMDFIAEVERTFKMLDGAVLILSAKEGIQAQTKLLFNTLQKLQIPTIIFINKIDRDGVNLERLYLDIKTNLSQDVLFMQTVVDGLVYPICSQTYIKEEYKEFVCNHDDNILERYLADSEISPADYWNTIIDLVAKAKVYPVLHGSAMFNIGINELLDAISSFILPPESVSNRLSAYLYKIEHDPKGHKRSFLKIIDGSLRLRDIVRINDSEKFIKIKNLKTIYQGRKINVDEVGANDIAIVEDMEDFRIGDYLGTKPCLIQGLSHQHPALKSSVRPDRSEERSKVISALNTLWIEDPSLSFSINSYSDELEISLYGLTQKEIIQTLLEERFSVKVHFDEIKTIYKERPVKKVNKIIQIEVPPNPYWATIGLTLEPLPLGTGLQIESDISYGYLNHSFQNAVFEGIRMSCQSGLHGWEVTDLKVTFTQAEYYSPVSTPADFRQLTPYVFRLALQQSGVDILEPMLYFELQIPQAASSKAITDLQKMMSEIEDISCNNEWCHIKGKVPYNTSKDYASEVSSYTKGLGVFMVKPCGYQITKGDYSDNIRMNEKDKILFMFQKSNVIKIMERSGNFYKAIQ.

The region spanning 1–244 (MNIINLGILA…AISSFILPPE (244 aa)) is the tr-type G domain. GTP is bound by residues 10-17 (AHIDAGKT), 74-78 (DTPGH), and 128-131 (NKID).

It belongs to the TRAFAC class translation factor GTPase superfamily. Classic translation factor GTPase family. TetM/TetO subfamily.

Functionally, abolishes the inhibitory effect of tetracyclin on protein synthesis by a non-covalent modification of the ribosomes. This is Tetracycline resistance protein TetQ (tetQ) from Prevotella intermedia.